The sequence spans 555 residues: Dihydroxy-acid dehydratase (555 aa).

Residue Asp-78 coordinates Mg(2+). Residue Cys-119 coordinates [2Fe-2S] cluster. Positions 120 and 121 each coordinate Mg(2+). The residue at position 121 (Lys-121) is an N6-carboxylysine. Cys-195 lines the [2Fe-2S] cluster pocket. Mg(2+) is bound at residue Glu-444. Catalysis depends on Ser-470, which acts as the Proton acceptor.

It belongs to the IlvD/Edd family. In terms of assembly, homodimer. It depends on [2Fe-2S] cluster as a cofactor. Mg(2+) serves as cofactor.

The catalysed reaction is (2R)-2,3-dihydroxy-3-methylbutanoate = 3-methyl-2-oxobutanoate + H2O. The enzyme catalyses (2R,3R)-2,3-dihydroxy-3-methylpentanoate = (S)-3-methyl-2-oxopentanoate + H2O. The protein operates within amino-acid biosynthesis; L-isoleucine biosynthesis; L-isoleucine from 2-oxobutanoate: step 3/4. It participates in amino-acid biosynthesis; L-valine biosynthesis; L-valine from pyruvate: step 3/4. In terms of biological role, functions in the biosynthesis of branched-chain amino acids. Catalyzes the dehydration of (2R,3R)-2,3-dihydroxy-3-methylpentanoate (2,3-dihydroxy-3-methylvalerate) into 2-oxo-3-methylpentanoate (2-oxo-3-methylvalerate) and of (2R)-2,3-dihydroxy-3-methylbutanoate (2,3-dihydroxyisovalerate) into 2-oxo-3-methylbutanoate (2-oxoisovalerate), the penultimate precursor to L-isoleucine and L-valine, respectively. The protein is Dihydroxy-acid dehydratase of Dehalococcoides mccartyi (strain ATCC BAA-2266 / KCTC 15142 / 195) (Dehalococcoides ethenogenes (strain 195)).